The chain runs to 145 residues: D-aminoacyl-tRNA deacylase (145 aa).

Residues 137–138 (GP) carry the Gly-cisPro motif, important for rejection of L-amino acids motif.

It belongs to the DTD family. Homodimer.

Its subcellular location is the cytoplasm. The catalysed reaction is glycyl-tRNA(Ala) + H2O = tRNA(Ala) + glycine + H(+). It carries out the reaction a D-aminoacyl-tRNA + H2O = a tRNA + a D-alpha-amino acid + H(+). Its function is as follows. An aminoacyl-tRNA editing enzyme that deacylates mischarged D-aminoacyl-tRNAs. Also deacylates mischarged glycyl-tRNA(Ala), protecting cells against glycine mischarging by AlaRS. Acts via tRNA-based rather than protein-based catalysis; rejects L-amino acids rather than detecting D-amino acids in the active site. By recycling D-aminoacyl-tRNA to D-amino acids and free tRNA molecules, this enzyme counteracts the toxicity associated with the formation of D-aminoacyl-tRNA entities in vivo and helps enforce protein L-homochirality. The polypeptide is D-aminoacyl-tRNA deacylase (Rhodococcus jostii (strain RHA1)).